A 745-amino-acid chain; its full sequence is Mitogen-activated protein kinase kinase kinase zak-1 (745 aa).

Positions 31–305 (IQVGDHIGVG…KVMDECEKFM (275 aa)) constitute a Protein kinase domain. ATP-binding positions include 37 to 45 (IGVGTFGAV) and Lys-63. Asp-159 serves as the catalytic Proton acceptor. The stretch at 307–352 (LEDWKTEIEKQEKNVEKMRKDLEKRREQLEIREKALKQRMKVEQAV) forms a coiled coil. The 73-residue stretch at 366-438 (WSEHHTSHWV…MKMIRKLADT (73 aa)) folds into the SAM domain. A disordered region spans residues 693–745 (LTRRRRTTTTNSEDTEKSDTNNKTPESQARRVHVHGGKDKWNWKKGKSRPKFT). Residues 735-745 (WKKGKSRPKFT) show a composition bias toward basic residues.

This sequence belongs to the protein kinase superfamily. STE Ser/Thr protein kinase family. MAP kinase kinase kinase subfamily. It depends on Mg(2+) as a cofactor. In terms of tissue distribution, widely expressed; expressed in most tissues, including intestines, muscle and the nervous system.

It localises to the cytoplasm. The protein resides in the nucleus. It catalyses the reaction L-seryl-[protein] + ATP = O-phospho-L-seryl-[protein] + ADP + H(+). The enzyme catalyses L-threonyl-[protein] + ATP = O-phospho-L-threonyl-[protein] + ADP + H(+). In terms of biological role, stress-activated component of a protein kinase signal transduction cascade that promotes programmed cell death in response to ribotoxic stress. Acts as the proximal sensor of ribotoxic stress: directly binds to the ribosome, thereby acting as a sentinel for colliding ribosomes. Upon ribosome collisions, activates the stress-activated protein kinase signal transduction cascade, leading to programmed cell death. Acts by catalyzing phosphorylation of MAP kinase kinases, leading to activation of the JNK and MAP kinase p38 pathways. The protein is Mitogen-activated protein kinase kinase kinase zak-1 of Caenorhabditis elegans.